A 266-amino-acid polypeptide reads, in one-letter code: uncharacterized protein (266 aa).

The N-terminal stretch at 1 to 22 is a signal peptide; the sequence is MGYFKRVVLYIIVMVVSVFIIG. Residue Cys-23 is the site of N-palmitoyl cysteine attachment. The S-diacylglycerol cysteine moiety is linked to residue Cys-23.

The protein belongs to the staphylococcal tandem lipoprotein family.

It localises to the cell membrane. This is an uncharacterized protein from Staphylococcus aureus (strain N315).